Reading from the N-terminus, the 597-residue chain is C4b-binding protein alpha chain (597 aa).

An N-terminal signal peptide occupies residues 1–48 (MHPPKTPSGALHRKRKMAAWPFSRLWKVSDPILFQMTLIAALLPAVLG). Sushi domains are found at residues 49 to 110 (NCGP…FCIY), 111 to 172 (KRCR…QCEI), 173 to 236 (VKCK…TCEK), 237 to 296 (ITCR…ACEP), 297 to 362 (NSCI…GCEA), 363 to 424 (LCCP…SCGD), 425 to 482 (ICNF…QCKA), and 483 to 540 (LCRK…KCEW). Intrachain disulfides connect Cys-50/Cys-96, Cys-81/Cys-108, Cys-113/Cys-154, Cys-140/Cys-170, Cys-175/Cys-217, Cys-203/Cys-234, Cys-239/Cys-281, Cys-267/Cys-294, Cys-299/Cys-348, Cys-332/Cys-360, Cys-365/Cys-409, Cys-399/Cys-422, Cys-426/Cys-468, Cys-454/Cys-480, Cys-484/Cys-525, and Cys-511/Cys-538. Asn-221 is a glycosylation site (N-linked (GlcNAc...) asparagine). N-linked (GlcNAc...) asparagine glycosylation is found at Asn-506 and Asn-528.

As to quaternary structure, disulfide-linked complex of alpha and beta chains of 3 possible sorts: a 570 kDa complex of 7 alpha chains and 1 beta chain, a 530 kDa homoheptamer of alpha chains or a 500 kDa complex of 6 alpha chains and 1 beta chain. The central body of the alpha chain homomer supports tentacles, each with the binding site for C4b at the end. (Microbial infection) Interacts with Staphylococcus aureus protein SdrE; this interaction inhibits complement-mediated bacterial opsonization. As to expression, chylomicrons in the plasma.

Its subcellular location is the secreted. Functionally, controls the classical pathway of complement activation. It binds as a cofactor to C3b/C4b inactivator (C3bINA), which then hydrolyzes the complement fragment C4b. It also accelerates the degradation of the C4bC2a complex (C3 convertase) by dissociating the complement fragment C2a. Alpha chain binds C4b. It also interacts with anticoagulant protein S and with serum amyloid P component. The sequence is that of C4b-binding protein alpha chain (C4BPA) from Homo sapiens (Human).